The chain runs to 204 residues: Recombination protein RecR (204 aa).

The C4-type zinc-finger motif lies at 58-75; that stretch reads CSICQNITDLGTDPCLLC. Residues 83 to 181 form the Toprim domain; sequence SVICVVESPT…NVTRIARGIP (99 aa).

Belongs to the RecR family.

Its function is as follows. May play a role in DNA repair. It seems to be involved in an RecBC-independent recombinational process of DNA repair. It may act with RecF and RecO. This Chlorobaculum parvum (strain DSM 263 / NCIMB 8327) (Chlorobium vibrioforme subsp. thiosulfatophilum) protein is Recombination protein RecR.